The chain runs to 1050 residues: Self-sufficient cytochrome P450 monooxygenase CYP505E5 (1050 aa).

Cys-405 contacts heme. A disordered region spans residues 461-495; that stretch reads TATGLSRRSMLVARDGSSEESSNHPAEARGDHAPA. Positions 500-641 constitute a Flavodoxin-like domain; it reads VSFFYGSNSG…DLEAWEETSL (142 aa). FMN is bound by residues 506–510 and 585–617; these read SNSGT and VFGCGHHDWTQTFYRIPILIDDLMYKAGATRLA. Residues 679 to 907 form the FAD-binding FR-type domain; sequence KGLIEAKVTA…RPAKETFHLP (229 aa).

This sequence in the N-terminal section; belongs to the cytochrome P450 family. The cofactor is FAD. Requires FMN as cofactor. Heme is required as a cofactor.

It catalyses the reaction 2 oxidized [cytochrome P450] + NADPH = 2 reduced [cytochrome P450] + NADP(+) + H(+). The catalysed reaction is an organic molecule + reduced [NADPH--hemoprotein reductase] + O2 = an alcohol + oxidized [NADPH--hemoprotein reductase] + H2O + H(+). It carries out the reaction dodecanoate + reduced [NADPH--hemoprotein reductase] + O2 = 5-hydroxydodecanoate + oxidized [NADPH--hemoprotein reductase] + H2O + H(+). The enzyme catalyses tetradecanoate + reduced [NADPH--hemoprotein reductase] + O2 = 7-hydroxytetradecanoate + oxidized [NADPH--hemoprotein reductase] + H2O + H(+). It catalyses the reaction dodecan-1-ol + reduced [NADPH--hemoprotein reductase] + O2 = 1,5-dodecanediol + oxidized [NADPH--hemoprotein reductase] + H2O + H(+). The catalysed reaction is dodecan-1-ol + reduced [NADPH--hemoprotein reductase] + O2 = 1,4-dodecanediol + oxidized [NADPH--hemoprotein reductase] + H2O + H(+). It carries out the reaction dodecan-1-ol + reduced [NADPH--hemoprotein reductase] + O2 = 1,6-dodecanediol + oxidized [NADPH--hemoprotein reductase] + H2O + H(+). Its function is as follows. Self-sufficient cytochrome P450 monooxygenase that catalyzes the regioselective in-chain hydroxylation of alkanes, fatty alcohols, and fatty acids at the omega-7 position. Performs hydroxylation of C10-C16 n-alkanes and C12 and C14 fatty alcohols; and thereby enables the one step biocatalytic synthesis of rare alcohols such as 5-dodecanol and 7-tetradecanol. Converts 1-dodecanol into 1,5-dodecanediol as major product with very little sub-terminally hydroxylated products with the 1,4-dodecanediol and 1,6-dodecanediol more abundant. Converts dodecanoic acid to 5-hydroxydodecanoic acid which can be further converted into delta-dodecalactone by lactonization of the 5-hydroxy acid at low pH. Also gives sub-terminal hydroxylation of dodecanoic acid with 9-hydroxydodecanoic acid being the second most abundant product. The sequence is that of Self-sufficient cytochrome P450 monooxygenase CYP505E5 from Aspergillus kawachii (strain NBRC 4308) (White koji mold).